We begin with the raw amino-acid sequence, 67 residues long: Large ribosomal subunit protein bL35 (67 aa).

A disordered region spans residues 21–50 (KVMCGPGNKRHGLINRPQKMKRTNRGPQTM). Residues 28–44 (NKRHGLINRPQKMKRTN) are compositionally biased toward basic residues.

Belongs to the bacterial ribosomal protein bL35 family.

This Gluconobacter oxydans (strain 621H) (Gluconobacter suboxydans) protein is Large ribosomal subunit protein bL35.